A 242-amino-acid chain; its full sequence is Segregation and condensation protein A (242 aa).

The protein belongs to the ScpA family. Component of a cohesin-like complex composed of ScpA, ScpB and the Smc homodimer, in which ScpA and ScpB bind to the head domain of Smc. The presence of the three proteins is required for the association of the complex with DNA.

The protein resides in the cytoplasm. Functionally, participates in chromosomal partition during cell division. May act via the formation of a condensin-like complex containing Smc and ScpB that pull DNA away from mid-cell into both cell halves. In Streptococcus pneumoniae serotype 4 (strain ATCC BAA-334 / TIGR4), this protein is Segregation and condensation protein A.